The sequence spans 520 residues: Hydroxymethylglutaryl-CoA synthase, cytoplasmic (520 aa).

Ser-4 carries the post-translational modification Phosphoserine. (3S)-3-hydroxy-3-methylglutaryl-CoA contacts are provided by Asp-43 and Ala-44. Residue 44–46 (AGK) coordinates CoA. Lys-46 carries the post-translational modification N6-acetyllysine. Catalysis depends on Glu-95, which acts as the Proton donor/acceptor. Residues Cys-129, Asn-167, Thr-171, Ser-221, and His-264 each coordinate (3S)-3-hydroxy-3-methylglutaryl-CoA. Cys-129 functions as the Acyl-thioester intermediate in the catalytic mechanism. Position 167 (Asn-167) interacts with CoA. Ser-221 lines the CoA pocket. Catalysis depends on His-264, which acts as the Proton donor/acceptor. The CoA site is built by Lys-269 and Lys-273. Lys-273, Asn-343, and Ser-377 together coordinate (3S)-3-hydroxy-3-methylglutaryl-CoA. Lys-273 is modified (N6-acetyllysine). The segment at 486–520 (SNTATEHIPSPAKKVPRLPATAAESESAVISNGEH) is disordered. Ser-495 and Ser-516 each carry phosphoserine.

Belongs to the thiolase-like superfamily. HMG-CoA synthase family. As to quaternary structure, homodimer.

Its subcellular location is the cytoplasm. It catalyses the reaction acetoacetyl-CoA + acetyl-CoA + H2O = (3S)-3-hydroxy-3-methylglutaryl-CoA + CoA + H(+). It participates in metabolic intermediate biosynthesis; (R)-mevalonate biosynthesis; (R)-mevalonate from acetyl-CoA: step 2/3. This enzyme condenses acetyl-CoA with acetoacetyl-CoA to form HMG-CoA, which is converted by HMG-CoA reductase (HMGCR) into mevalonate, a precursor for cholesterol synthesis. In Cricetulus griseus (Chinese hamster), this protein is Hydroxymethylglutaryl-CoA synthase, cytoplasmic.